Consider the following 165-residue polypeptide: Putative BTB/POZ domain-containing protein At2g40440 (165 aa).

Residues 24 to 98 (VDVRLKAGDS…IYSDGSMLSA (75 aa)) enclose the BTB domain.

It participates in protein modification; protein ubiquitination. Functionally, may act as a substrate-specific adapter of an E3 ubiquitin-protein ligase complex (CUL3-RBX1-BTB) which mediates the ubiquitination and subsequent proteasomal degradation of target proteins. This chain is Putative BTB/POZ domain-containing protein At2g40440, found in Arabidopsis thaliana (Mouse-ear cress).